The sequence spans 193 residues: Large ribosomal subunit protein uL18 (193 aa).

The protein belongs to the universal ribosomal protein uL18 family. As to quaternary structure, part of the 50S ribosomal subunit. Contacts the 5S and 23S rRNAs.

Its function is as follows. This is one of the proteins that bind and probably mediate the attachment of the 5S RNA into the large ribosomal subunit, where it forms part of the central protuberance. This chain is Large ribosomal subunit protein uL18, found in Methanosphaera stadtmanae (strain ATCC 43021 / DSM 3091 / JCM 11832 / MCB-3).